The following is a 282-amino-acid chain: MNSFPIPVVLLGPGSQAEDETLDYIHMPQGMSVYTPPVLPEPEQIACLTQAQSVLRAILDALDRADPKQPNPRIELWALDEENRQLLKQVLGEGEVSARIEGEYQVYIQEAVFAGVWRVVSTCPDATTDYIEVGAAPEVLRGAARYGANQWSLDVGRVPDGVMNAPSILAEIDDQLLSWHPGKPVHVVNLTLLPMSPQDITFLDETLGAASVTILSRGYGNCRISSTAVPYCWRVVYFNSQDTTILNTVEITDLPEVACAAPEDLRDSHERLTEVLKWVGSI.

The protein belongs to the HupH/HyaF family.

The protein is Hydrogenase expression/formation protein HoxQ (hoxQ) of Cupriavidus necator (strain ATCC 17699 / DSM 428 / KCTC 22496 / NCIMB 10442 / H16 / Stanier 337) (Ralstonia eutropha).